The following is a 476-amino-acid chain: Eukaryotic translation initiation factor 3 subunit L (476 aa).

In terms of domain architecture, PCI spans 257–452 (DAIRMFSHIL…DLDYALENDL (196 aa)).

This sequence belongs to the eIF-3 subunit L family. As to quaternary structure, component of the eukaryotic translation initiation factor 3 (eIF-3) complex.

It localises to the cytoplasm. Component of the eukaryotic translation initiation factor 3 (eIF-3) complex, which is involved in protein synthesis of a specialized repertoire of mRNAs and, together with other initiation factors, stimulates binding of mRNA and methionyl-tRNAi to the 40S ribosome. The eIF-3 complex specifically targets and initiates translation of a subset of mRNAs involved in cell proliferation. This chain is Eukaryotic translation initiation factor 3 subunit L, found in Aspergillus fumigatus (strain CBS 144.89 / FGSC A1163 / CEA10) (Neosartorya fumigata).